The primary structure comprises 401 residues: Proline-rich protein 30 (401 aa).

Positions 69 to 80 are enriched in polar residues; it reads PGPHFSSDSNSD. Disordered regions lie at residues 69-93, 129-191, and 357-401; these read PGPH…PRSS, SSSL…RGAG, and QSPK…KSPS. Composition is skewed to low complexity over residues 83–93 and 129–147; these read PPHSSSHPRSS and SSSL…QSPS. 2 stretches are compositionally biased toward polar residues: residues 148 to 186 and 357 to 368; these read RLQD…SIKS and QSPKPSQCSRSL.

This is Proline-rich protein 30 (Prr30) from Mus musculus (Mouse).